A 268-amino-acid chain; its full sequence is MRRFSNICVILFSFLYATGHGASEEVMACLRQERSRVENPSQTIVNVVAENPAYLHCSVPPDAEHEIAWTRVSDGALLTAGNRTFTRDPRWQVSKKSANIWVLNLRRAEQQDSGCYLCEINDKHNTVYAVYLKVLEPPLPSPSSLQKKSTKLMANMSGDEVVLNCTVTSTDKDEEVLDVVWTRDGNTINFNDTEKYILKVKRDAGVVIETMRIRKATMEDDGNYACEHSQQKASQIVHINKAEAQTSNSATFPCSIFSISIFMYFLYL.

The signal sequence occupies residues 1-21; that stretch reads MRRFSNICVILFSFLYATGHG. Ig-like C2-type domains follow at residues 40 to 128 and 140 to 251; these read PSQT…NTVY and PSPS…NSAT. Cys57 and Cys118 form a disulfide bridge. Residues Asn82, Asn155, Asn164, and Asn191 are each glycosylated (N-linked (GlcNAc...) asparagine). Cys165 and Cys226 are disulfide-bonded.

Expressed in PVT neurons and pharyngeal muscles.

It is found in the secreted. Functionally, together with zig-5, required postembryonically to maintain the position of ASI and ASH head neuron cell bodies and ventral nerve cord axons of PVQ, PVP and HSN neurons by preventing their displacement that could occur during body growth and movement. May act by reducing L1CAM-like protein sax-7 (long isoform) adhesion. The polypeptide is Zwei Ig domain protein zig-8 (Caenorhabditis elegans).